Here is an 830-residue protein sequence, read N- to C-terminus: Periplasmic nitrate reductase (830 aa).

A signal peptide (tat-type signal) is located at residues 1–31 (MKLSRRDFMKANAAVAAAAAAGMTIPTVAKA). The 4Fe-4S Mo/W bis-MGD-type domain occupies 39–95 (IKWDKAPCRFCGTGCGVLVGTQNGRIVASQGDPDSPVNRGLNCIKGYFLPKIMYGKD). Positions 46, 49, 53, and 81 each coordinate [4Fe-4S] cluster. Mo-bis(molybdopterin guanine dinucleotide) is bound by residues lysine 83, glutamine 150, asparagine 175, cysteine 179, 212–219 (WGSNMAEM), 243–247 (STYEH), 262–264 (QTD), methionine 372, glutamine 376, asparagine 482, 508–509 (SD), lysine 531, aspartate 558, and 718–727 (TGRVLEHWHT). Position 794 (phenylalanine 794) interacts with substrate. Mo-bis(molybdopterin guanine dinucleotide) contacts are provided by asparagine 802 and lysine 819.

The protein belongs to the prokaryotic molybdopterin-containing oxidoreductase family. NasA/NapA/NarB subfamily. Component of the periplasmic nitrate reductase NapAB complex composed of NapA and NapB. [4Fe-4S] cluster serves as cofactor. The cofactor is Mo-bis(molybdopterin guanine dinucleotide). Post-translationally, predicted to be exported by the Tat system. The position of the signal peptide cleavage has not been experimentally proven.

Its subcellular location is the periplasm. The enzyme catalyses 2 Fe(II)-[cytochrome] + nitrate + 2 H(+) = 2 Fe(III)-[cytochrome] + nitrite + H2O. Catalytic subunit of the periplasmic nitrate reductase complex NapAB. Receives electrons from NapB and catalyzes the reduction of nitrate to nitrite. This chain is Periplasmic nitrate reductase, found in Yersinia pestis bv. Antiqua (strain Antiqua).